Consider the following 636-residue polypeptide: Chaperone protein DnaK (636 aa).

Threonine 198 bears the Phosphothreonine; by autocatalysis mark. A compositionally biased stretch (low complexity) spans 602–613 (QPAGEEQAGAAA). The disordered stretch occupies residues 602-636 (QPAGEEQAGAAAHEGEAKGEKVVDADFEEVKEDKK). Positions 614–625 (HEGEAKGEKVVD) are enriched in basic and acidic residues. Residues 626 to 636 (ADFEEVKEDKK) show a composition bias toward acidic residues.

This sequence belongs to the heat shock protein 70 family.

Acts as a chaperone. This Geotalea daltonii (strain DSM 22248 / JCM 15807 / FRC-32) (Geobacter daltonii) protein is Chaperone protein DnaK.